Reading from the N-terminus, the 241-residue chain is Ribonuclease PH (241 aa).

Residues Arg-87 and 125–127 each bind phosphate; that span reads GTR.

It belongs to the RNase PH family. As to quaternary structure, homohexameric ring arranged as a trimer of dimers.

It carries out the reaction tRNA(n+1) + phosphate = tRNA(n) + a ribonucleoside 5'-diphosphate. In terms of biological role, phosphorolytic 3'-5' exoribonuclease that plays an important role in tRNA 3'-end maturation. Removes nucleotide residues following the 3'-CCA terminus of tRNAs; can also add nucleotides to the ends of RNA molecules by using nucleoside diphosphates as substrates, but this may not be physiologically important. Probably plays a role in initiation of 16S rRNA degradation (leading to ribosome degradation) during starvation. In Salinispora tropica (strain ATCC BAA-916 / DSM 44818 / JCM 13857 / NBRC 105044 / CNB-440), this protein is Ribonuclease PH.